The chain runs to 725 residues: Ribosomal RNA large subunit methyltransferase K/L (725 aa).

The 112-residue stretch at Val-46–Leu-157 folds into the THUMP domain.

Belongs to the methyltransferase superfamily. RlmKL family.

It is found in the cytoplasm. It carries out the reaction guanosine(2445) in 23S rRNA + S-adenosyl-L-methionine = N(2)-methylguanosine(2445) in 23S rRNA + S-adenosyl-L-homocysteine + H(+). The enzyme catalyses guanosine(2069) in 23S rRNA + S-adenosyl-L-methionine = N(2)-methylguanosine(2069) in 23S rRNA + S-adenosyl-L-homocysteine + H(+). Its function is as follows. Specifically methylates the guanine in position 2445 (m2G2445) and the guanine in position 2069 (m7G2069) of 23S rRNA. This chain is Ribosomal RNA large subunit methyltransferase K/L, found in Pseudomonas aeruginosa (strain ATCC 15692 / DSM 22644 / CIP 104116 / JCM 14847 / LMG 12228 / 1C / PRS 101 / PAO1).